The chain runs to 575 residues: Arginine--tRNA ligase (575 aa).

The 'HIGH' region signature appears at 136-146 (ANPTGPLHVGH).

It belongs to the class-I aminoacyl-tRNA synthetase family. As to quaternary structure, monomer.

The protein localises to the cytoplasm. The catalysed reaction is tRNA(Arg) + L-arginine + ATP = L-arginyl-tRNA(Arg) + AMP + diphosphate. The polypeptide is Arginine--tRNA ligase (Polynucleobacter necessarius subsp. necessarius (strain STIR1)).